The primary structure comprises 517 residues: Protein MGF 505-2R (517 aa).

The protein belongs to the asfivirus MGF 505 family.

Functionally, plays a role in virus cell tropism, and may be required for efficient virus replication in macrophages. This chain is Protein MGF 505-2R, found in African swine fever virus (isolate Warthog/Namibia/Wart80/1980) (ASFV).